Here is a 141-residue protein sequence, read N- to C-terminus: Nuclear transcription factor Y subunit B-1 (141 aa).

Residues 1 to 23 (MADTPSSPAGDGGESGGSVREQD) are disordered. Ala-2 carries the post-translational modification N-acetylalanine. Residues 26–32 (LPIANIS) mediate DNA binding. The interval 53–64 (VQECVSEFISFI) is subunit association domain (SAD). A disordered region spans residues 114–141 (DNKGSGKSGDGSNRDAGGGVSGEEMPSW).

This sequence belongs to the NFYB/HAP3 subunit family. As to quaternary structure, heterotrimeric transcription factor composed of three components, NF-YA, NF-YB and NF-YC. NF-YB and NF-YC must interact and dimerize for NF-YA association and DNA binding. Binds directly with DPB3-1. As to expression, ubiquitous. Predominantly expressed in leaves, flowers and siliques.

Its subcellular location is the nucleus. Component of the NF-Y/HAP transcription factor complex. The NF-Y complex stimulates the transcription of various genes by recognizing and binding to a CCAAT motif in promoters. In Arabidopsis thaliana (Mouse-ear cress), this protein is Nuclear transcription factor Y subunit B-1.